We begin with the raw amino-acid sequence, 459 residues long: Cytosolic carboxypeptidase 6 (459 aa).

One can recognise a Peptidase M14 domain in the interval 142-418 (IPYTYGQMQI…AFCRALLNFY (277 aa)). Zn(2+) contacts are provided by His204, Glu207, and His302. Residue Glu376 is the Proton donor/acceptor of the active site.

Belongs to the peptidase M14 family. It depends on Zn(2+) as a cofactor. In terms of tissue distribution, expressed in labial and amphid neurons.

It localises to the cytoplasm. It carries out the reaction (L-glutamyl)(n+1)-gamma-L-glutamyl-L-glutamyl-[protein] + H2O = (L-glutamyl)(n)-gamma-L-glutamyl-L-glutamyl-[protein] + L-glutamate. Its function is as follows. Metallocarboxypeptidase that catalyzes the removing of polyglutamate side chains that are present on the gamma-carboxyl group of glutamate residues of tubulin in sensory cilia. Probably via the deglutamylation of tubulin, promotes microtubule stability required for axon regrowth after injury. Also regulates microtubule dynamics in uterine muscle cells. The chain is Cytosolic carboxypeptidase 6 from Caenorhabditis elegans.